Consider the following 851-residue polypeptide: Pentatricopeptide repeat-containing protein At3g54980, mitochondrial (851 aa).

A mitochondrion-targeting transit peptide spans 1 to 26 (MRSLLVFRKIPSRIRLRNLRNNKPFC). 19 PPR repeats span residues 162 to 196 (NSRA…DVIP), 197 to 231 (FFPY…GVDG), 232 to 266 (DNVT…GAEP), 267 to 301 (DSLL…KLCV), 303 to 337 (SQET…GISM), 338 to 372 (NVVA…GPSP), 373 to 407 (NSVT…GLTP), 408 to 438 (SVFH…SFET), 442 to 476 (NVFV…GIGP), 477 to 511 (NVVS…GLKP), 512 to 546 (NNYT…NIEV), 547 to 577 (NGVV…MIEE), 583 to 617 (SCMS…GISP), 618 to 652 (NVIT…GVKL), 653 to 687 (DIPA…GLNP), 688 to 722 (SQPI…GLRC), 723 to 757 (DLGT…GLVP), 758 to 792 (DEII…NVTP), and 793 to 827 (NVLI…GILP).

This sequence belongs to the PPR family. P subfamily.

Its subcellular location is the mitochondrion. The sequence is that of Pentatricopeptide repeat-containing protein At3g54980, mitochondrial from Arabidopsis thaliana (Mouse-ear cress).